Here is a 462-residue protein sequence, read N- to C-terminus: UDP-N-acetylmuramate--L-alanine ligase (462 aa).

Residue 117-123 (GTHGKTT) participates in ATP binding.

This sequence belongs to the MurCDEF family.

It is found in the cytoplasm. The catalysed reaction is UDP-N-acetyl-alpha-D-muramate + L-alanine + ATP = UDP-N-acetyl-alpha-D-muramoyl-L-alanine + ADP + phosphate + H(+). It functions in the pathway cell wall biogenesis; peptidoglycan biosynthesis. Cell wall formation. This is UDP-N-acetylmuramate--L-alanine ligase from Streptomyces coelicolor (strain ATCC BAA-471 / A3(2) / M145).